Consider the following 552-residue polypeptide: Ribulokinase (552 aa).

This sequence belongs to the ribulokinase family.

It catalyses the reaction D-ribulose + ATP = D-ribulose 5-phosphate + ADP + H(+). It carries out the reaction L-ribulose + ATP = L-ribulose 5-phosphate + ADP + H(+). It functions in the pathway carbohydrate degradation; L-arabinose degradation via L-ribulose; D-xylulose 5-phosphate from L-arabinose (bacterial route): step 2/3. The polypeptide is Ribulokinase (Bacillus licheniformis (strain ATCC 14580 / DSM 13 / JCM 2505 / CCUG 7422 / NBRC 12200 / NCIMB 9375 / NCTC 10341 / NRRL NRS-1264 / Gibson 46)).